A 142-amino-acid chain; its full sequence is uncharacterized protein (142 aa).

The first 20 residues, 1-20, serve as a signal peptide directing secretion; it reads MPSVNEFFIFFLIVWHTCEC. N-linked (GlcNAc...) asparagine glycosylation is present at Asn80.

This is an uncharacterized protein from Dictyostelium discoideum (Social amoeba).